The sequence spans 458 residues: Monomethylamine methyltransferase MtmB1 (458 aa).

Position 202 (O202) is a non-standard amino acid, pyrrolysine.

The protein belongs to the monomethylamine methyltransferase family. Can form a complex with MtmC.

The enzyme catalyses Co(I)-[methylamine-specific corrinoid protein] + methylamine + H(+) = methyl-Co(III)-[methylamine-specific corrinoid protein] + NH4(+). Its pathway is one-carbon metabolism; methanogenesis from methylamine. Catalyzes the transfer of the methyl group from monomethylamine to the corrinoid cofactor of MtmC. The protein is Monomethylamine methyltransferase MtmB1 (mtmB1) of Methanosarcina acetivorans (strain ATCC 35395 / DSM 2834 / JCM 12185 / C2A).